A 547-amino-acid polypeptide reads, in one-letter code: GMP synthase [glutamine-hydrolyzing] (547 aa).

A Glutamine amidotransferase type-1 domain is found at 12-210 (KVLILDFGSQ…VLEIAGAKPD (199 aa)). Cysteine 89 acts as the Nucleophile in catalysis. Active-site residues include histidine 184 and glutamate 186. Positions 211-403 (WIMRDHIEEA…LGLPPEMVYR (193 aa)) constitute a GMPS ATP-PPase domain. 238–244 (SGGVDSS) is an ATP binding site.

As to quaternary structure, homodimer.

It catalyses the reaction XMP + L-glutamine + ATP + H2O = GMP + L-glutamate + AMP + diphosphate + 2 H(+). The protein operates within purine metabolism; GMP biosynthesis; GMP from XMP (L-Gln route): step 1/1. Catalyzes the synthesis of GMP from XMP. This Ralstonia nicotianae (strain ATCC BAA-1114 / GMI1000) (Ralstonia solanacearum) protein is GMP synthase [glutamine-hydrolyzing].